The chain runs to 1167 residues: MEINNQKQCIPYNCLSNPEEVLLDGERILPDIDPLEVSLSLLQFLLNNFVPGGGFISGLVDKIWGALRPSEWDLFLAQIERLIDQRIEATVRAKAITELEGLGRNYQIYAEAFKEWESDPDNEAAKSRVIDRFRILDGLIEANIPSFRIIGFEVPLLSVYVQAANLHLALLRDSVIFGERWGLTTKNVNDIYNRQIREIHEYSNHCVDTYNTELERLGFRSIAQWRIYNQFRRELTLTVLDIVALFPNYDSRLYPIQTFSQLTREIVTSPVSEFYYGVINSGNIIGTLTEQQIRRPHLMDFFNSMIMYTSDNRREHYWSGLEMTAYFTGFAGAQVSFPLVGTRGESAPPLTVRSVNDGIYRILSAPFYSAPFLGTIVLGSRGEKFDFALNNISPPPSTIYRHPGTVDSLVSIPPQDNSVPPHRGSSHRLSHVTMRASSPIFHWTHRSATTTNTINPNAIIQIPLVKAFNLHSGATVVRGPGFTGGDILRRTNTGTFADMRVNITGPLSQRYRVRIRYASTTDLQFFTRINGTSVNQGNFQRTMNRGDNLESGNFRTAGFSTPFSFSNAQSTFTLGTQAFSNQEVYIDRIEFVPAEVTFEAESDLERAQKAVNALFTSTNQLGLKTDVTDYQIDQVSNLVECLSDEFCLDEKRELSEKVKHAKRLSDKRNLLQDPNFTSINRQLDRGWRGSTDITIQGGNDVFKENYVTLPGTFDECYPTYLYQKIDESKLKAYTRYELRGYIEDSQDLEVYLIRYNAKHETVNVPGTGSLWPLSVESPIGRCGEPNRCVPHIEWNPDLDCSCRDGEKCAHHSHHFSLDIDVGCTDLNEDLGVWVIFKIKTQDGHARLGNLEFLEEKPLLGEALARVKRAEKKWRDKREQLQFETNIVYKEAKESVDALFVDSHYNRLQADTNITMIHAADKRVHRIREAYLPELSVIPGVNADIFEELEGLIFTAFSLYDARNIIKNGDFNNGLSCWNVKGHVDIQQNDHRSVLVVPEWESEVSQEVRVCPGRGYILRVTAYKEGYGEGCVTIHEIEDNTDELKFSNCIEEEVYPTDTGNDYTAHQGTTGCADACNSRNVGYEDGYEINTTASVNYKPTYEEEMYTDVRRDNHCEYDRGYGNHTPLPAGYVTKELEYFPETDTVWIEIGETEGTFIVDSVELLLMEE.

Belongs to the delta endotoxin family.

In terms of biological role, promotes colloidosmotic lysis by binding to the midgut epithelial cells of many lepidopteran larvae. The protein is Pesticidal crystal protein Cry1Ja (cry1Ja) of Bacillus thuringiensis.